The sequence spans 51 residues: Large ribosomal subunit protein eL39 (51 aa).

Belongs to the eukaryotic ribosomal protein eL39 family. As to quaternary structure, interacts with IMPACT.

In Gallus gallus (Chicken), this protein is Large ribosomal subunit protein eL39 (RPL39).